The chain runs to 479 residues: Aspartyl/glutamyl-tRNA(Asn/Gln) amidotransferase subunit B (479 aa).

Belongs to the GatB/GatE family. GatB subfamily. Heterotrimer of A, B and C subunits.

The catalysed reaction is L-glutamyl-tRNA(Gln) + L-glutamine + ATP + H2O = L-glutaminyl-tRNA(Gln) + L-glutamate + ADP + phosphate + H(+). The enzyme catalyses L-aspartyl-tRNA(Asn) + L-glutamine + ATP + H2O = L-asparaginyl-tRNA(Asn) + L-glutamate + ADP + phosphate + 2 H(+). Its function is as follows. Allows the formation of correctly charged Asn-tRNA(Asn) or Gln-tRNA(Gln) through the transamidation of misacylated Asp-tRNA(Asn) or Glu-tRNA(Gln) in organisms which lack either or both of asparaginyl-tRNA or glutaminyl-tRNA synthetases. The reaction takes place in the presence of glutamine and ATP through an activated phospho-Asp-tRNA(Asn) or phospho-Glu-tRNA(Gln). This chain is Aspartyl/glutamyl-tRNA(Asn/Gln) amidotransferase subunit B, found in Streptococcus pyogenes serotype M5 (strain Manfredo).